The chain runs to 250 residues: Cell division protein ZapD (250 aa).

It belongs to the ZapD family. As to quaternary structure, interacts with FtsZ.

Its subcellular location is the cytoplasm. Cell division factor that enhances FtsZ-ring assembly. Directly interacts with FtsZ and promotes bundling of FtsZ protofilaments, with a reduction in FtsZ GTPase activity. The protein is Cell division protein ZapD of Pectobacterium atrosepticum (strain SCRI 1043 / ATCC BAA-672) (Erwinia carotovora subsp. atroseptica).